Consider the following 574-residue polypeptide: E3 ubiquitin-protein ligase TRIM23 (574 aa).

The RING-type; degenerate zinc finger occupies 31–76 (CGVCEDVFSLQGDKVPRLLLCGHTVCHDCLTRLPLHGRAIRCPFDR). The B box-type; degenerate zinc-finger motif lies at 122–168 (ESIIRCDEDEAHVASVYCTVCATHLCSDCSQVTHSTKTLAKHRRVPL). Positions 352–379 (RVVLAKQEITRLLETLQKQQQQFTEVAD) form a coiled coil. The tract at residues 390–574 (TFTKDNRVHI…LVAAGVLDVA (185 aa)) is ARF-like. GTP is bound by residues 411-418 (GLDGAGKT), 454-458 (DVGGK), and 513-516 (NKQD).

This sequence in the C-terminal section; belongs to the small GTPase superfamily. Arf family. As to quaternary structure, homodimer. Interacts with PSCD1. Interacts with UBE2D2. Interacts with TBK1 (via N-terminal kinase domain) and p62/SQSTM1.

It localises to the cytoplasm. Its subcellular location is the endomembrane system. The protein localises to the golgi apparatus membrane. It is found in the lysosome membrane. It catalyses the reaction S-ubiquitinyl-[E2 ubiquitin-conjugating enzyme]-L-cysteine + [acceptor protein]-L-lysine = [E2 ubiquitin-conjugating enzyme]-L-cysteine + N(6)-ubiquitinyl-[acceptor protein]-L-lysine.. The protein operates within protein modification; protein ubiquitination. Functionally, acts as an E3 ubiquitin-protein ligase. Plays an essential role in autophagy activation during viral infection. Mechanistically, activates TANK-binding kinase 1/TBK1 by facilitating its dimerization and ability to phosphorylate the selective autophagy receptor SQSTM1. In order to achieve this function, TRIM23 mediates 'Lys-27'-linked auto-ubiquitination of its ADP-ribosylation factor (ARF) domain to induce its GTPase activity and its recruitment to autophagosomes. This Mus musculus (Mouse) protein is E3 ubiquitin-protein ligase TRIM23 (Trim23).